Consider the following 202-residue polypeptide: Eukaryotic translation initiation factor isoform 4E (202 aa).

Residues 1–24 (MATEAPPPVDTTEVPPFTAAETAV) form a disordered region. MRNA contacts are provided by residues 46–51 (QGAAWG), K78, and 96–97 (WE). Residues C101 and C140 are joined by a disulfide bond. MRNA is bound by residues 147–152 (RRSQDK) and 191–194 (KRER).

The protein belongs to the eukaryotic initiation factor 4E family. In terms of assembly, EIF4F is a multi-subunit complex, the composition of which varies with external and internal environmental conditions. It is composed of at least EIF4A, EIF4E and EIF4G. EIF4E is also known to interact with other partners. In higher plants two isoforms of EIF4F have been identified, named isoform EIF4F and isoform EIF(iso)4F. Isoform EIF4F has subunits p220 and p26, whereas isoform EIF(iso)4F has subunits p82 and p28. (Microbial infection) Interacts with viral genome-linked protein (VPg); this interaction is possible in susceptible hosts but impaired in resistant plants. According to the redox status, the Cys-101-Cys-140 disulfide bridge may have a role in regulating protein function by affecting its ability to bind capped mRNA.

The protein resides in the cytoplasm. It is found in the nucleus. In terms of biological role, component of the protein complex eIF4F, which is involved in the recognition of the mRNA cap, ATP-dependent unwinding of 5'-terminal secondary structure and recruitment of mRNA to the ribosome. Recognizes and binds the 7-methylguanosine-containing mRNA cap during an early step in the initiation of protein synthesis and facilitates ribosome binding by inducing the unwinding of the mRNAs secondary structures. Key component of recessive resistance to potyviruses. Functionally, (Microbial infection) Susceptibility host factor required for viral infection by recruiting viral RNAs to the host ribosomal complex via an interaction with viral genome-linked protein (VPg). In Capsicum annuum (Capsicum pepper), this protein is Eukaryotic translation initiation factor isoform 4E.